The primary structure comprises 920 residues: MTAEETVNVKEVEIIKLILDFLNSKKLHISMLALEKESGVINGLFSDDMLFLRQLILDGQWDEVLQFIQPLECMEKFDKKRFRYIILKQKFLEALCVNNAMSAEDEPQHLEFTMQEAVQCLHALEEYCPSKDDYSKLCLLLTLPRLTNHAEFKDWNPSTARVHCFEEVCVMVAEFIPADRKLSEAGFKASNNRLFQLVMKGLLYECCVEFCQSKATGEEITESEVLLGIDLLCGNGCDDLDLSLLSWLQNLPSSVFSCAFEQKMLNIHVDKLLKPTKAAYADLLTPLISKLSPYPSSPMRRPQSADAYMTRSLNPALDGLTCGLTSHDKRISDLGNKTSPMSHSFANFHYPGVQNLSRSLMLENTECHSIYEESPERSDTPVEAQQPVSSEAMCQGSGLEKEPANGAQNPVPAKQEKNELRDSTEQFQEYYRQRLRYQQHLEQKEQQRQMYQQMLLEGGVNQEDGPDQQQNLTEQFLNRSIQKLGELNIGMDSLGNEVPVLNQQCSGSKNNGSNNSSVTSFSTPPQDSSQRLIHDTANIHTSTPRNPGSTNHIPFHEDSPCGSQNSSEHSVIKPSPGDSSGNLSRSKGEEDDKSKKQFVCINTLEDTQAVRAVAFHPSGSLYAVGSNSKTLRVCAYPEKMDASAHDNPKQPVVRFKRNKHHKGSIYCVAWSPCGQLLATGSNDKYVKVLPFNAETCNATGPDLEFSMHDGTIRDLAFMEGPESGGAILISAGAGDCNIYTTDCQRGQGLHALSGHTGHILALYTWSGWMIASGSQDKTVRFWDLRVPSCVRVVGTTFHGTGSAVASVAVDPSGRLLATGQEDSSCMLYDIRGGRMVQSYHPHSSDVRSVRFSPGAHYLLTGSYDMKIKVTDLQGDLTKQLPLMVVGEHKDKVIQCRWHTQDLSFLSSSADRTVTLWTYSG.

The LisH domain occupies 10 to 42 (KEVEIIKLILDFLNSKKLHISMLALEKESGVIN). The region spanning 45 to 102 (FSDDMLFLRQLILDGQWDEVLQFIQPLECMEKFDKKRFRYIILKQKFLEALCVNNAMS) is the CTLH domain. Residue Thr-285 is modified to Phosphothreonine. Phosphoserine occurs at positions 289, 292, 297, and 312. Residues 371–380 (YEESPERSDT) are compositionally biased toward basic and acidic residues. The disordered stretch occupies residues 371–422 (YEESPERSDTPVEAQQPVSSEAMCQGSGLEKEPANGAQNPVPAKQEKNELRD). Ser-423 carries the phosphoserine modification. The tract at residues 501–594 (LNQQCSGSKN…RSKGEEDDKS (94 aa)) is disordered. Residues 506–523 (SGSKNNGSNNSSVTSFST) show a composition bias toward low complexity. Residues 538–552 (NIHTSTPRNPGSTNH) show a composition bias toward polar residues. The residue at position 543 (Thr-543) is a Phosphothreonine. WD repeat units lie at residues 605–644 (EDTQAVRAVAFHPSGSLYAVGSNSKTLRVCAYPEKMDASA), 660–699 (HHKGSIYCVAWSPCGQLLATGSNDKYVKVLPFNAETCNAT), 707–749 (MHDG…GQGL), 754–792 (GHTGHILALYTWSGWMIASGSQDKTVRFWDLRVPSCVRV), 799–838 (GTGSAVASVAVDPSGRLLATGQEDSSCMLYDIRGGRMVQS), 841–880 (PHSSDVRSVRFSPGAHYLLTGSYDMKIKVTDLQGDLTKQL), and 887–919 (EHKDKVIQCRWHTQDLSFLSSSADRTVTLWTYS).

As to quaternary structure, interacts with MAP1S (via WD repeats). As to expression, enriched in the nervous system (at protein level).

It is found in the cytoplasm. The protein localises to the cytoskeleton. This chain is WD repeat-containing protein 47 (Wdr47), found in Mus musculus (Mouse).